Here is a 109-residue protein sequence, read N- to C-terminus: Cell division protein ZapA (109 aa).

Residues 22–99 adopt a coiled-coil conformation; that stretch reads EQQDALNLAA…IEQALLEQGR (78 aa).

This sequence belongs to the ZapA family. Type 1 subfamily. As to quaternary structure, homodimer. Interacts with FtsZ.

The protein localises to the cytoplasm. Functionally, activator of cell division through the inhibition of FtsZ GTPase activity, therefore promoting FtsZ assembly into bundles of protofilaments necessary for the formation of the division Z ring. It is recruited early at mid-cell but it is not essential for cell division. This chain is Cell division protein ZapA, found in Erwinia tasmaniensis (strain DSM 17950 / CFBP 7177 / CIP 109463 / NCPPB 4357 / Et1/99).